Reading from the N-terminus, the 102-residue chain is Small ribosomal subunit protein uS10 (102 aa).

It belongs to the universal ribosomal protein uS10 family. Part of the 30S ribosomal subunit.

In terms of biological role, involved in the binding of tRNA to the ribosomes. The protein is Small ribosomal subunit protein uS10 of Roseiflexus castenholzii (strain DSM 13941 / HLO8).